The sequence spans 3974 residues: Hybrid PKS-NRPS synthetase 1 (3974 aa).

The 438-residue stretch at 5–442 (SQKIAIIGSA…GTNAHCLIES (438 aa)) folds into the Ketosynthase family 3 (KS3) domain. Catalysis depends on for beta-ketoacyl synthase activity residues C179, H316, and H362. The tract at residues 561–883 (IFTGQGAQWA…TGILERGLDD (323 aa)) is malonyl-CoA:ACP transacylase (MAT) domain. The segment at 954 to 1079 (HPLLGSRLSA…HDSELGIPES (126 aa)) is N-terminal hotdog fold. The tract at residues 954–1251 (HPLLGSRLSA…QVESVKLVPV (298 aa)) is dehydratase (DH) domain. The region spanning 954 to 1257 (HPLLGSRLSA…LVPVITPDAS (304 aa)) is the PKS/mFAS DH domain. H986 (proton acceptor; for dehydratase activity) is an active-site residue. The interval 1107-1257 (TTPISSAKIY…LVPVITPDAS (151 aa)) is C-terminal hotdog fold. D1165 functions as the Proton donor; for dehydratase activity in the catalytic mechanism. The interval 1398 to 1529 (PWNTELRNAI…GYLLLVAKTG (132 aa)) is methyltransferase (MT) domain. A ketoreductase (KR) domain region spans residues 2108–2282 (TYFLAGMTDS…ASIMDTGVVT (175 aa)). The interval 2492-2516 (AGRSASPGASCSDRSLSTRSDETRS) is disordered. Residues 2498-2509 (PGASCSDRSLST) show a composition bias toward polar residues. The segment at 2560 to 2994 (APLSPGQAQL…LERLRTSSDQ (435 aa)) is condensation (C) domain. Positions 3021 to 3423 (DAMAEKYFDQ…DGSLILLGRM (403 aa)) are adenylation (A) (KR) domain. One can recognise a Carrier domain in the interval 3537–3613 (SADQLVEAEV…EMAEKMASVR (77 aa)). S3573 carries the post-translational modification O-(pantetheine 4'-phosphoryl)serine. The reductase (RED) domain stretch occupies residues 3657–3940 (VVLTGAADLL…KLEMGEWIAL (284 aa)).

In the C-terminal section; belongs to the NRP synthetase family.

It functions in the pathway secondary metabolite biosynthesis. Functionally, hybrid PKS-NRPS synthetase; part of the hps1-dma1 gene cluster that probably mediates the biosynthesis a derivative of cyclopiazonic acid (CPA). The hybrid polyketide synthase-nonribosomal peptide synthetase (PKS-NRPS) nps1 might incorporates acetyl-CoA, malonyl-CoA, and tryptophan (Trp) and utilizes a C-terminal redox-incompetent reductase domain to make and release the tryptophan tetramic acid, cyclo-acetoacetyl-L-tryptophan (c-AATrp), as the first intermediate in the pathway. In addition, the cluster also includes the tryptophan dimethylallyltransferase dma1, the FAD-dependent oxidoreductase toxD, the cytochrome P450 monooxygenase cyp3.1 and the methyltransferase DOTSEDRAFT_139328; the latter 2 being not present in all CPA-producing fungi but involved in additional modifications that occur in biosynthesis the of a range of CPA and CPA-like products. Further studies are required to clarify whether the CPA-like hps1-dma1 cluster is functional or a non-functional relic reflecting evolution of D.septosporum. The polypeptide is Hybrid PKS-NRPS synthetase 1 (Dothistroma septosporum (strain NZE10 / CBS 128990) (Red band needle blight fungus)).